The chain runs to 243 residues: Protein canopy homolog 3 (243 aa).

An N-terminal signal peptide occupies residues 1–15; it reads MWFLFLLLPLWAGCA. The 210-residue stretch at 27-236 folds into the Saposin B-type domain; the sequence is SKCEVCKYVA…KEEKKQMDQP (210 aa). Disulfide bonds link Cys-29-Cys-188, Cys-32-Cys-176, and Cys-86-Cys-148. Positions 136-160 form a coiled coil; the sequence is ETSAEVADMKKQCDVMMENYEEVIE. The tract at residues 186-243 is disordered; that stretch reads QSCLSEQGDSRKGDTGPSTGTKKQKKQGEKKNKSKKQNSGSKEEKKQMDQPMAAKEEL. Basic and acidic residues predominate over residues 226 to 243; sequence SKEEKKQMDQPMAAKEEL.

The protein belongs to the canopy family.

It localises to the endoplasmic reticulum. In terms of biological role, toll-like receptor (TLR)-specific co-chaperone for HSP90B1. Required for proper TLR folding and hence controls TLR exit from the endoplasmic reticulum. Consequently, required for immune responses. This Xenopus laevis (African clawed frog) protein is Protein canopy homolog 3 (cnpy3).